A 73-amino-acid polypeptide reads, in one-letter code: Putative membrane protein insertion efficiency factor (73 aa).

The protein belongs to the UPF0161 family.

The protein localises to the cell inner membrane. Functionally, could be involved in insertion of integral membrane proteins into the membrane. The sequence is that of Putative membrane protein insertion efficiency factor from Parabacteroides distasonis (strain ATCC 8503 / DSM 20701 / CIP 104284 / JCM 5825 / NCTC 11152).